The chain runs to 176 residues: Ribosome maturation factor RimM (176 aa).

One can recognise a PRC barrel domain in the interval 101–173; it reads EGEYYHYRLI…RMVVDLPEGL (73 aa).

The protein belongs to the RimM family. In terms of assembly, binds ribosomal protein uS19.

It localises to the cytoplasm. An accessory protein needed during the final step in the assembly of 30S ribosomal subunit, possibly for assembly of the head region. Essential for efficient processing of 16S rRNA. May be needed both before and after RbfA during the maturation of 16S rRNA. It has affinity for free ribosomal 30S subunits but not for 70S ribosomes. In Syntrophobacter fumaroxidans (strain DSM 10017 / MPOB), this protein is Ribosome maturation factor RimM.